The chain runs to 291 residues: Prepilin leader peptidase/N-methyltransferase (291 aa).

Residues 14–34 (LYFSLVFLFSLMIGSFLNVVI) form a helical membrane-spanning segment. Zn(2+)-binding residues include cysteine 75, cysteine 78, cysteine 100, and cysteine 103. 6 helical membrane passes run 107 to 127 (ISAR…VVAM), 131 to 151 (PGWG…LTFI), 162 to 182 (LTLP…YVPL), 186 to 206 (VIGA…FKLL), 232 to 252 (LPIV…GLIL), and 262 to 282 (IPFG…GDSI).

This sequence belongs to the peptidase A24 family. Requires Zn(2+) as cofactor.

The protein localises to the cell inner membrane. It catalyses the reaction Typically cleaves a -Gly-|-Phe- bond to release an N-terminal, basic peptide of 5-8 residues from type IV prepilin, and then N-methylates the new N-terminal amino group, the methyl donor being S-adenosyl-L-methionine.. Plays an essential role in type IV pili and type II pseudopili formation by proteolytically removing the leader sequence from substrate proteins and subsequently monomethylating the alpha-amino group of the newly exposed N-terminal phenylalanine. The polypeptide is Prepilin leader peptidase/N-methyltransferase (tapD) (Aeromonas salmonicida (strain A449)).